The primary structure comprises 643 residues: Capsid scaffolding protein (643 aa).

The span at 1–15 (MSSPSPSSSSSDHPS) shows a compositional bias: low complexity. A disordered region spans residues 1–31 (MSSPSPSSSSSDHPSSPAPVPAPPGPVPEAA). Positions 16-27 (SPAPVPAPPGPV) are enriched in pro residues. Residues His82, Ser151, and His173 each act as charge relay system in the active site. The segment at 283 to 306 (SARGGEDPPTAAIATTPHPATDAT) is disordered. Residues 290–306 (PPTAAIATTPHPATDAT) are compositionally biased toward low complexity. The interval 324–343 (EDLISVPRSTFMTMLQTNLD) is interaction with pAP. The short motif at 439-445 (RPGKRKR) is the Nuclear localization signal element. Disordered regions lie at residues 485–519 (QQFPQPLPQPQLQPQAQPQPQPAPQLYPAPPQAFY) and 544–625 (CAPG…STKP). The segment covering 489-515 (QPLPQPQLQPQAQPQPQPAPQLYPAPP) has biased composition (pro residues). Residues 607–616 (PQQQQQPQQQ) are compositionally biased toward low complexity. Residues 623 to 643 (TKPSQISQLQKIFCEELLNKT) form an interaction with major capsid protein region.

It belongs to the herpesviridae capsid scaffolding protein family. As to quaternary structure, homomultimer. Interacts with major capsid protein. Exists in a monomer-dimer equilibrium with the dimer being the active species. In terms of processing, capsid scaffolding protein is cleaved by assemblin after formation of the spherical procapsid. As a result, the capsid obtains its mature, icosahedral shape. Cleavages occur at two or more sites: release (R-site) and maturation (M-site).

Its subcellular location is the host cytoplasm. It is found in the host nucleus. The enzyme catalyses Cleaves -Ala-|-Ser- and -Ala-|-Ala- bonds in the scaffold protein.. Functionally, acts as a scaffold protein by binding major capsid protein in the cytoplasm, inducing the nuclear localization of both proteins. Multimerizes in the nucleus such as major capsid protein forms the icosahedral T=16 capsid. Autocatalytic cleavage releases the assembly protein, and subsequently abolishes interaction with major capsid protein. Cleavages products are evicted from the capsid before or during DNA packaging. Its function is as follows. Protease that plays an essential role in virion assembly within the nucleus. Catalyzes the cleavage of the assembly protein after formation of the spherical procapsid. By that cleavage, the capsid matures and gains its icosahedral shape. The cleavage sites seem to include -Ala-Ser-, -Ala-Ala-, as well as Ala-Thr bonds. Assemblin and cleavages products are evicted from the capsid before or during DNA packaging. Plays a major role in capsid assembly. Acts as a scaffold protein by binding major capsid protein. Multimerizes in the nucleus such as major capsid protein forms the icosahedral T=16 capsid. Cleaved by assemblin after capsid completion. The cleavages products are evicted from the capsid before or during DNA packaging. This chain is Capsid scaffolding protein, found in Equine herpesvirus 2 (strain 86/87) (EHV-2).